The primary structure comprises 429 residues: Enolase (429 aa).

Residue glutamine 162 coordinates (2R)-2-phosphoglycerate. The active-site Proton donor is glutamate 204. The Mg(2+) site is built by aspartate 241, glutamate 283, and aspartate 310. (2R)-2-phosphoglycerate-binding residues include lysine 335, arginine 364, serine 365, and lysine 386. The active-site Proton acceptor is the lysine 335.

The protein belongs to the enolase family. The cofactor is Mg(2+).

The protein resides in the cytoplasm. The protein localises to the secreted. It localises to the cell surface. The catalysed reaction is (2R)-2-phosphoglycerate = phosphoenolpyruvate + H2O. Its pathway is carbohydrate degradation; glycolysis; pyruvate from D-glyceraldehyde 3-phosphate: step 4/5. In terms of biological role, catalyzes the reversible conversion of 2-phosphoglycerate (2-PG) into phosphoenolpyruvate (PEP). It is essential for the degradation of carbohydrates via glycolysis. The polypeptide is Enolase (Mycolicibacterium vanbaalenii (strain DSM 7251 / JCM 13017 / BCRC 16820 / KCTC 9966 / NRRL B-24157 / PYR-1) (Mycobacterium vanbaalenii)).